The sequence spans 326 residues: Glutaminase 2 (326 aa).

Residues S73, N125, E169, N176, Y200, Y252, and V270 each coordinate substrate.

It belongs to the glutaminase family. Homotetramer.

It catalyses the reaction L-glutamine + H2O = L-glutamate + NH4(+). This chain is Glutaminase 2, found in Bacillus anthracis.